A 351-amino-acid polypeptide reads, in one-letter code: Transmembrane protein 185-like (351 aa).

A run of 8 helical transmembrane segments spans residues 16 to 36 (LIYACLLLFSVLLSLRLDGII), 41 to 61 (WAVFAPIWLWKLMVIIGASVG), 81 to 101 (FKAMLIAVGIHLLLLTFEVLV), 113 to 133 (WLLVFMPLFFVSPVSVAACVW), 154 to 174 (FIFIALKLDGIISWPWLVVCV), 178 to 198 (ILMSFLCLVVLYYIVWSVLFL), 212 to 232 (ITMAISWMTIVVPLLTFEILL), and 244 to 264 (YVPVFVPLWVSLVTLMVTTFG).

This sequence belongs to the TMEM185 family.

The protein resides in the membrane. The sequence is that of Transmembrane protein 185-like from Danio rerio (Zebrafish).